The following is an 833-amino-acid chain: Leucine--tRNA ligase (833 aa).

Positions 41 to 52 match the 'HIGH' region motif; that stretch reads PYPSGAGLHVGH. A 'KMSKS' region motif is present at residues 610-614; it reads KMSKS. ATP is bound at residue Lys613.

It belongs to the class-I aminoacyl-tRNA synthetase family.

It localises to the cytoplasm. It catalyses the reaction tRNA(Leu) + L-leucine + ATP = L-leucyl-tRNA(Leu) + AMP + diphosphate. The protein is Leucine--tRNA ligase of Streptococcus pyogenes serotype M3 (strain ATCC BAA-595 / MGAS315).